A 416-amino-acid chain; its full sequence is Serine hydroxymethyltransferase (416 aa).

(6S)-5,6,7,8-tetrahydrofolate contacts are provided by residues leucine 121 and 125–127 (GHL). Lysine 229 carries the post-translational modification N6-(pyridoxal phosphate)lysine. (6S)-5,6,7,8-tetrahydrofolate-binding positions include glutamate 245 and 354-356 (SPF).

It belongs to the SHMT family. As to quaternary structure, homodimer. Pyridoxal 5'-phosphate is required as a cofactor.

Its subcellular location is the cytoplasm. The enzyme catalyses (6R)-5,10-methylene-5,6,7,8-tetrahydrofolate + glycine + H2O = (6S)-5,6,7,8-tetrahydrofolate + L-serine. Its pathway is one-carbon metabolism; tetrahydrofolate interconversion. The protein operates within amino-acid biosynthesis; glycine biosynthesis; glycine from L-serine: step 1/1. Functionally, catalyzes the reversible interconversion of serine and glycine with tetrahydrofolate (THF) serving as the one-carbon carrier. This reaction serves as the major source of one-carbon groups required for the biosynthesis of purines, thymidylate, methionine, and other important biomolecules. Also exhibits THF-independent aldolase activity toward beta-hydroxyamino acids, producing glycine and aldehydes, via a retro-aldol mechanism. In Aliivibrio salmonicida (strain LFI1238) (Vibrio salmonicida (strain LFI1238)), this protein is Serine hydroxymethyltransferase.